The chain runs to 552 residues: uncharacterized protein (552 aa).

Positions 8–200 (KLFADMIIQG…LLCVYEGFLK (193 aa)) constitute a DhaL domain.

This is an uncharacterized protein from Staphylococcus haemolyticus (strain JCSC1435).